The sequence spans 261 residues: Thiazole synthase (261 aa).

Lys102 (schiff-base intermediate with DXP) is an active-site residue. 1-deoxy-D-xylulose 5-phosphate-binding positions include Gly163, 189-190 (AG), and 211-212 (NT).

Belongs to the ThiG family. Homotetramer. Forms heterodimers with either ThiH or ThiS.

Its subcellular location is the cytoplasm. It carries out the reaction [ThiS sulfur-carrier protein]-C-terminal-Gly-aminoethanethioate + 2-iminoacetate + 1-deoxy-D-xylulose 5-phosphate = [ThiS sulfur-carrier protein]-C-terminal Gly-Gly + 2-[(2R,5Z)-2-carboxy-4-methylthiazol-5(2H)-ylidene]ethyl phosphate + 2 H2O + H(+). It participates in cofactor biosynthesis; thiamine diphosphate biosynthesis. In terms of biological role, catalyzes the rearrangement of 1-deoxy-D-xylulose 5-phosphate (DXP) to produce the thiazole phosphate moiety of thiamine. Sulfur is provided by the thiocarboxylate moiety of the carrier protein ThiS. In vitro, sulfur can be provided by H(2)S. In Acinetobacter baumannii (strain SDF), this protein is Thiazole synthase.